The primary structure comprises 126 residues: Glycine cleavage system H protein (126 aa).

The Lipoyl-binding domain occupies 21–103; that stretch reads TVTVGISDHA…YESGWIARIK (83 aa). An N6-lipoyllysine modification is found at K62.

Belongs to the GcvH family. As to quaternary structure, the glycine cleavage system is composed of four proteins: P, T, L and H. The cofactor is (R)-lipoate.

Its function is as follows. The glycine cleavage system catalyzes the degradation of glycine. The H protein shuttles the methylamine group of glycine from the P protein to the T protein. This Aliivibrio fischeri (strain ATCC 700601 / ES114) (Vibrio fischeri) protein is Glycine cleavage system H protein.